The following is a 477-amino-acid chain: Epoxyalcohol synthase CYP5164B1 (477 aa).

Residue cysteine 421 participates in heme binding.

The protein belongs to the cytochrome P450 family. It depends on heme as a cofactor.

It catalyses the reaction (9S)-hydroperoxy-(10E,12Z)-octadecadienoate = (11S)-hydroxy-(9S,10S)-epoxy-(12Z)-octadecenoate. It carries out the reaction (13S)-hydroperoxy-(9Z,11E)-octadecadienoate = 11-hydroxy-12,13-epoxy-(9Z)-octadecenoate. Its pathway is lipid metabolism; oxylipin biosynthesis. Cytochrome P450 epoxyalcohol synthase involved in the metabolism of oxylipins 'ectocarpins' natural products, such as hybridalactone, ecklonilactones and derivatives. Isomerizes the hydroperoxides into epoxyalcohols via epoxyallylic radical. Can use linoleic acid 9-hydroperoxide ((9S,10E,12Z)-9-hydroperoxy-10,12-octadecadienoic, 9-HPOD) as preferred substrate to produce (9S,10S,11S,12Z)-9,10-epoxy-11-hydroxy-12-octadecenoic acid and, to a lower extent, active with linoleate 13-hydroperoxide ((9Z,11E,13S)-13-hydroperoxy-9,11-octadecadienoic, 13-HPOD) to produce 11-hydroxy-12,13-epoxy-9-octadecenoic acid. No activity toward alpha-linolenic acid 9- and 13-hydroperoxides, and toward eicosapentaenoic acid 15-hydroperoxide. This chain is Epoxyalcohol synthase CYP5164B1, found in Ectocarpus siliculosus (Brown alga).